We begin with the raw amino-acid sequence, 75 residues long: UPF0352 protein YejL (75 aa).

This sequence belongs to the UPF0352 family.

The protein is UPF0352 protein YejL of Escherichia coli O139:H28 (strain E24377A / ETEC).